Here is a 172-residue protein sequence, read N- to C-terminus: ATP synthase subunit b (172 aa).

A helical membrane pass occupies residues 17–37 (IVFSAIVLAIVLPFFWWFVIP).

Belongs to the ATPase B chain family. F-type ATPases have 2 components, F(1) - the catalytic core - and F(0) - the membrane proton channel. F(1) has five subunits: alpha(3), beta(3), gamma(1), delta(1), epsilon(1). F(0) has three main subunits: a(1), b(2) and c(10-14). The alpha and beta chains form an alternating ring which encloses part of the gamma chain. F(1) is attached to F(0) by a central stalk formed by the gamma and epsilon chains, while a peripheral stalk is formed by the delta and b chains.

It is found in the cell membrane. In terms of biological role, f(1)F(0) ATP synthase produces ATP from ADP in the presence of a proton or sodium gradient. F-type ATPases consist of two structural domains, F(1) containing the extramembraneous catalytic core and F(0) containing the membrane proton channel, linked together by a central stalk and a peripheral stalk. During catalysis, ATP synthesis in the catalytic domain of F(1) is coupled via a rotary mechanism of the central stalk subunits to proton translocation. Its function is as follows. Component of the F(0) channel, it forms part of the peripheral stalk, linking F(1) to F(0). This Tropheryma whipplei (strain TW08/27) (Whipple's bacillus) protein is ATP synthase subunit b.